The sequence spans 305 residues: MTTPPSSPLSDPRRTEGVHPTHTDLDRLDPLALVQVFTDDQRAAVEAVRAAVPALARAVEAALPRLERGGRLVYVGAGTSGRLAVLDATELTPTFSWPPERAVPLIAGGERAIRQAVEGAEDDAEAGAADVRAAGTGPQDVLIALAASGTTPYVLGAVRAARALGALTIGLANNPGTPLLAAAECPILLDTGPEVISGSTRLKAGTAQKIALNTLSSALMVRLGKVYGNLMVDVKVSNAKLETRALRLTCHATGASEAEARAALAQAGGRVKTALVMLRLGLSAPEAEVRLQAAGGHARVALGEG.

A disordered region spans residues 1–24; sequence MTTPPSSPLSDPRRTEGVHPTHTD. Residues 11–24 are compositionally biased toward basic and acidic residues; that stretch reads DPRRTEGVHPTHTD. The SIS domain maps to 62–225; that stretch reads ALPRLERGGR…SSALMVRLGK (164 aa). Catalysis depends on glutamate 90, which acts as the Proton donor. Glutamate 121 is a catalytic residue.

It belongs to the GCKR-like family. MurNAc-6-P etherase subfamily. In terms of assembly, homodimer.

It carries out the reaction N-acetyl-D-muramate 6-phosphate + H2O = N-acetyl-D-glucosamine 6-phosphate + (R)-lactate. It functions in the pathway amino-sugar metabolism; N-acetylmuramate degradation. Specifically catalyzes the cleavage of the D-lactyl ether substituent of MurNAc 6-phosphate, producing GlcNAc 6-phosphate and D-lactate. The protein is N-acetylmuramic acid 6-phosphate etherase of Deinococcus geothermalis (strain DSM 11300 / CIP 105573 / AG-3a).